Consider the following 56-residue polypeptide: Ovomucoid (56 aa).

Residues 6-56 form the Kazal-like domain; that stretch reads VDCSEYPKPACMSEYRPLCGSDNKTYVNKCNFCNAVVESNGTLTLSHFGKC. 3 cysteine pairs are disulfide-bonded: Cys-8-Cys-38, Cys-16-Cys-35, and Cys-24-Cys-56. Asn-45 carries N-linked (GlcNAc...) asparagine glycosylation.

It is found in the secreted. The chain is Ovomucoid from Colinus virginianus (Northern bobwhite).